The following is a 471-amino-acid chain: Adenosylhomocysteinase (471 aa).

3 residues coordinate substrate: T60, D135, and E196. T197–T199 contributes to the NAD(+) binding site. Residues K226 and D230 each coordinate substrate. Residues N231, G260–G265, E283, N318, I339–H341, and N387 contribute to the NAD(+) site.

This sequence belongs to the adenosylhomocysteinase family. NAD(+) is required as a cofactor.

It localises to the cytoplasm. The catalysed reaction is S-adenosyl-L-homocysteine + H2O = L-homocysteine + adenosine. Its pathway is amino-acid biosynthesis; L-homocysteine biosynthesis; L-homocysteine from S-adenosyl-L-homocysteine: step 1/1. In terms of biological role, may play a key role in the regulation of the intracellular concentration of adenosylhomocysteine. This is Adenosylhomocysteinase from Chlorobaculum tepidum (strain ATCC 49652 / DSM 12025 / NBRC 103806 / TLS) (Chlorobium tepidum).